The sequence spans 405 residues: Glutathione S-transferase LANCL1 (405 aa).

Residue C282 coordinates Zn(2+). Residue K323 participates in glutathione binding. Zn(2+) is bound by residues C328 and H329. R370 to D373 contributes to the glutathione binding site.

This sequence belongs to the LanC-like protein family.

Its subcellular location is the cytoplasm. The protein localises to the cell membrane. It carries out the reaction RX + glutathione = an S-substituted glutathione + a halide anion + H(+). It catalyses the reaction 1-chloro-2,4-dinitrobenzene + glutathione = 2,4-dinitrophenyl-S-glutathione + chloride + H(+). Its function is as follows. Functions as a glutathione transferase. Catalyzes conjugation of the glutathione (GSH) to artificial substrates 1-chloro-2,4-dinitrobenzene (CDNB) and p-nitrophenyl acetate. Binds glutathione. In Danio rerio (Zebrafish), this protein is Glutathione S-transferase LANCL1.